We begin with the raw amino-acid sequence, 542 residues long: Ribulokinase 2 (542 aa).

The protein belongs to the ribulokinase family.

The catalysed reaction is D-ribulose + ATP = D-ribulose 5-phosphate + ADP + H(+). It catalyses the reaction L-ribulose + ATP = L-ribulose 5-phosphate + ADP + H(+). It participates in carbohydrate degradation; L-arabinose degradation via L-ribulose; D-xylulose 5-phosphate from L-arabinose (bacterial route): step 2/3. This is Ribulokinase 2 from Staphylococcus saprophyticus subsp. saprophyticus (strain ATCC 15305 / DSM 20229 / NCIMB 8711 / NCTC 7292 / S-41).